The chain runs to 125 residues: Gene 61 protein (125 aa).

This is Gene 61 protein (61) from Mycobacterium phage D29 (Mycobacteriophage D29).